A 150-amino-acid chain; its full sequence is Large ribosomal subunit protein uL13 (150 aa).

The protein belongs to the universal ribosomal protein uL13 family. As to quaternary structure, part of the 50S ribosomal subunit.

This protein is one of the early assembly proteins of the 50S ribosomal subunit, although it is not seen to bind rRNA by itself. It is important during the early stages of 50S assembly. This is Large ribosomal subunit protein uL13 from Sulfurihydrogenibium sp. (strain YO3AOP1).